Reading from the N-terminus, the 510-residue chain is Chromosomal replication initiator protein DnaA (510 aa).

Residues 1 to 87 are domain I, interacts with DnaA modulators; that stretch reads MSVELWQQCV…IGSRRSSAPR (87 aa). Positions 87-173 are domain II; sequence RAAPNAPVSA…QVEGALKHTS (87 aa). Residues 140–160 are disordered; it reads DSFDAMAEPASAPASSGRAEQ. Residues 144–157 are compositionally biased toward low complexity; that stretch reads AMAEPASAPASSGR. The interval 174-390 is domain III, AAA+ region; that stretch reads YLNRTFTFDT…GALKRVIAHS (217 aa). 4 residues coordinate ATP: glycine 218, glycine 220, lysine 221, and threonine 222. Positions 391–510 are domain IV, binds dsDNA; that stretch reads HFMGRDITIE…YKNLLRTLTT (120 aa).

The protein belongs to the DnaA family. As to quaternary structure, oligomerizes as a right-handed, spiral filament on DNA at oriC.

The protein localises to the cytoplasm. In terms of biological role, plays an essential role in the initiation and regulation of chromosomal replication. ATP-DnaA binds to the origin of replication (oriC) to initiate formation of the DNA replication initiation complex once per cell cycle. Binds the DnaA box (a 9 base pair repeat at the origin) and separates the double-stranded (ds)DNA. Forms a right-handed helical filament on oriC DNA; dsDNA binds to the exterior of the filament while single-stranded (ss)DNA is stabiized in the filament's interior. The ATP-DnaA-oriC complex binds and stabilizes one strand of the AT-rich DNA unwinding element (DUE), permitting loading of DNA polymerase. After initiation quickly degrades to an ADP-DnaA complex that is not apt for DNA replication. Binds acidic phospholipids. This Pseudomonas putida (strain GB-1) protein is Chromosomal replication initiator protein DnaA.